The primary structure comprises 66 residues: Large ribosomal subunit protein uL29 (66 aa).

This sequence belongs to the universal ribosomal protein uL29 family.

This is Large ribosomal subunit protein uL29 from Mesorhizobium japonicum (strain LMG 29417 / CECT 9101 / MAFF 303099) (Mesorhizobium loti (strain MAFF 303099)).